Here is a 200-residue protein sequence, read N- to C-terminus: Imidazoleglycerol-phosphate dehydratase (200 aa).

The protein belongs to the imidazoleglycerol-phosphate dehydratase family.

The protein resides in the cytoplasm. The catalysed reaction is D-erythro-1-(imidazol-4-yl)glycerol 3-phosphate = 3-(imidazol-4-yl)-2-oxopropyl phosphate + H2O. The protein operates within amino-acid biosynthesis; L-histidine biosynthesis; L-histidine from 5-phospho-alpha-D-ribose 1-diphosphate: step 6/9. The chain is Imidazoleglycerol-phosphate dehydratase from Chlorobium phaeobacteroides (strain DSM 266 / SMG 266 / 2430).